The sequence spans 130 residues: Small ribosomal subunit protein uS8 (130 aa).

The protein belongs to the universal ribosomal protein uS8 family. As to quaternary structure, part of the 30S ribosomal subunit. Contacts proteins S5 and S12.

Its function is as follows. One of the primary rRNA binding proteins, it binds directly to 16S rRNA central domain where it helps coordinate assembly of the platform of the 30S subunit. The protein is Small ribosomal subunit protein uS8 of Chromohalobacter salexigens (strain ATCC BAA-138 / DSM 3043 / CIP 106854 / NCIMB 13768 / 1H11).